The primary structure comprises 353 residues: DNA polymerase IV (353 aa).

Positions Ile-14–Gly-198 constitute a UmuC domain. Positions 18 and 116 each coordinate Mg(2+). Glu-117 is an active-site residue.

Belongs to the DNA polymerase type-Y family. In terms of assembly, monomer. Mg(2+) is required as a cofactor.

Its subcellular location is the cytoplasm. It carries out the reaction DNA(n) + a 2'-deoxyribonucleoside 5'-triphosphate = DNA(n+1) + diphosphate. Its function is as follows. Poorly processive, error-prone DNA polymerase involved in untargeted mutagenesis. Copies undamaged DNA at stalled replication forks, which arise in vivo from mismatched or misaligned primer ends. These misaligned primers can be extended by PolIV. Exhibits no 3'-5' exonuclease (proofreading) activity. May be involved in translesional synthesis, in conjunction with the beta clamp from PolIII. In Streptococcus pneumoniae serotype 2 (strain D39 / NCTC 7466), this protein is DNA polymerase IV.